The chain runs to 532 residues: MATGKEKNAKNPMSLLIVLMAGLFLAILNQTLLNVAMPHLMTEFGVSATTIQWLTTGYMLVNGVLIPLSAFLITRFGQRSLFLVAMFCFTLGTLVCGIAPNFSTMLIGRLIQAVGGGILQPLVMTTILLIFPPESRGKGMGIFGLAMMFAPAVGPTLSGWIIEHYTWRIMFYGLVPIGAIVIIVAFFIFKNMVEPQKIKLDTLGAILSIVGFASLLYGVSEAGSDGWTDPIVLSTVIIGAIAIVAFVVQQLRHDDPMLDFRVFKYDIFSLSSVINIIITVALYTGMFLLPIYLQNLVGFTALQSGLLLLPGAIVMLIMSPISGILFDKFGPRPLAIIGLLVTVVTTYQYTQLTIDTPYTHIMLIYSIRAFGMSLLMMPVMTAGMNQLPARLNSHGTAMSNTLRQISGSIGTSLITTIYTNRTTFHYSQIADKTSTADPNFLHAFQNAVSNLMVNMNVSYDTAKTYVYSHIYKHASLDSNVMGINDAFMWATLFCVAGLILSIFLRDVRKDKLRKKKKEELSLLPAPKEAKES.

Helical transmembrane passes span 13–33 (MSLL…QTLL), 53–73 (WLTT…AFLI), 80–100 (SLFL…GIAP), 111–131 (IQAV…LLIF), 142–162 (IFGL…GWII), 169–189 (IMFY…FFIF), 203–223 (LGAI…SEAG), 231–251 (IVLS…VQQL), 273–293 (VINI…PIYL), 306–326 (LLLL…GILF), 334–354 (LAII…QLTI), 361–381 (IMLI…PVMT), and 483–503 (INDA…LSIF).

Belongs to the major facilitator superfamily. EmrB family.

The protein resides in the cell membrane. This is an uncharacterized protein from Bacillus subtilis (strain 168).